Reading from the N-terminus, the 315-residue chain is GTP cyclohydrolase MptA (315 aa).

Belongs to the GTP cyclohydrolase IV family. Homodimer. Fe(2+) is required as a cofactor.

It carries out the reaction GTP + H2O = 7,8-dihydroneopterin 2',3'-cyclic phosphate + formate + diphosphate + H(+). It participates in cofactor biosynthesis; 5,6,7,8-tetrahydromethanopterin biosynthesis. Converts GTP to 7,8-dihydro-D-neopterin 2',3'-cyclic phosphate, the first intermediate in the biosynthesis of coenzyme methanopterin. This chain is GTP cyclohydrolase MptA, found in Methanococcus maripaludis (strain C7 / ATCC BAA-1331).